We begin with the raw amino-acid sequence, 158 residues long: S-ribosylhomocysteine lyase (158 aa).

Positions 54, 58, and 124 each coordinate Fe cation.

Belongs to the LuxS family. In terms of assembly, homodimer. The cofactor is Fe cation.

It carries out the reaction S-(5-deoxy-D-ribos-5-yl)-L-homocysteine = (S)-4,5-dihydroxypentane-2,3-dione + L-homocysteine. Functionally, involved in the synthesis of autoinducer 2 (AI-2) which is secreted by bacteria and is used to communicate both the cell density and the metabolic potential of the environment. The regulation of gene expression in response to changes in cell density is called quorum sensing. Catalyzes the transformation of S-ribosylhomocysteine (RHC) to homocysteine (HC) and 4,5-dihydroxy-2,3-pentadione (DPD). This chain is S-ribosylhomocysteine lyase, found in Lactiplantibacillus plantarum (strain ATCC BAA-793 / NCIMB 8826 / WCFS1) (Lactobacillus plantarum).